Reading from the N-terminus, the 243-residue chain is Pyridoxine 5'-phosphate synthase (243 aa).

Asn9 contacts 3-amino-2-oxopropyl phosphate. 11 to 12 (DH) is a binding site for 1-deoxy-D-xylulose 5-phosphate. Arg20 is a 3-amino-2-oxopropyl phosphate binding site. The Proton acceptor role is filled by His45. 2 residues coordinate 1-deoxy-D-xylulose 5-phosphate: Arg47 and His52. Glu72 acts as the Proton acceptor in catalysis. Thr102 contacts 1-deoxy-D-xylulose 5-phosphate. His193 serves as the catalytic Proton donor. Residues Gly194 and 215–216 (GH) contribute to the 3-amino-2-oxopropyl phosphate site.

Belongs to the PNP synthase family. Homooctamer; tetramer of dimers.

It localises to the cytoplasm. It catalyses the reaction 3-amino-2-oxopropyl phosphate + 1-deoxy-D-xylulose 5-phosphate = pyridoxine 5'-phosphate + phosphate + 2 H2O + H(+). It participates in cofactor biosynthesis; pyridoxine 5'-phosphate biosynthesis; pyridoxine 5'-phosphate from D-erythrose 4-phosphate: step 5/5. Its function is as follows. Catalyzes the complicated ring closure reaction between the two acyclic compounds 1-deoxy-D-xylulose-5-phosphate (DXP) and 3-amino-2-oxopropyl phosphate (1-amino-acetone-3-phosphate or AAP) to form pyridoxine 5'-phosphate (PNP) and inorganic phosphate. The chain is Pyridoxine 5'-phosphate synthase from Pectobacterium atrosepticum (strain SCRI 1043 / ATCC BAA-672) (Erwinia carotovora subsp. atroseptica).